The primary structure comprises 213 residues: NADH-quinone oxidoreductase subunit C (213 aa).

It belongs to the complex I 30 kDa subunit family. As to quaternary structure, NDH-1 is composed of 15 different subunits. Subunits NuoB, C, D, E, F, and G constitute the peripheral sector of the complex.

The protein localises to the cell membrane. It catalyses the reaction a quinone + NADH + 5 H(+)(in) = a quinol + NAD(+) + 4 H(+)(out). Its function is as follows. NDH-1 shuttles electrons from NADH, via FMN and iron-sulfur (Fe-S) centers, to quinones in the respiratory chain. The immediate electron acceptor for the enzyme in this species is believed to be a menaquinone. Couples the redox reaction to proton translocation (for every two electrons transferred, four hydrogen ions are translocated across the cytoplasmic membrane), and thus conserves the redox energy in a proton gradient. This is NADH-quinone oxidoreductase subunit C from Deinococcus geothermalis (strain DSM 11300 / CIP 105573 / AG-3a).